Consider the following 289-residue polypeptide: Phosphatidylserine decarboxylase proenzyme (289 aa).

Residues Asp92, His149, and Ser254 each act as charge relay system; for autoendoproteolytic cleavage activity in the active site. Ser254 (schiff-base intermediate with substrate; via pyruvic acid; for decarboxylase activity) is an active-site residue. Position 254 is a pyruvic acid (Ser); by autocatalysis (Ser254).

This sequence belongs to the phosphatidylserine decarboxylase family. PSD-B subfamily. Prokaryotic type I sub-subfamily. As to quaternary structure, heterodimer of a large membrane-associated beta subunit and a small pyruvoyl-containing alpha subunit. It depends on pyruvate as a cofactor. In terms of processing, is synthesized initially as an inactive proenzyme. Formation of the active enzyme involves a self-maturation process in which the active site pyruvoyl group is generated from an internal serine residue via an autocatalytic post-translational modification. Two non-identical subunits are generated from the proenzyme in this reaction, and the pyruvate is formed at the N-terminus of the alpha chain, which is derived from the carboxyl end of the proenzyme. The autoendoproteolytic cleavage occurs by a canonical serine protease mechanism, in which the side chain hydroxyl group of the serine supplies its oxygen atom to form the C-terminus of the beta chain, while the remainder of the serine residue undergoes an oxidative deamination to produce ammonia and the pyruvoyl prosthetic group on the alpha chain. During this reaction, the Ser that is part of the protease active site of the proenzyme becomes the pyruvoyl prosthetic group, which constitutes an essential element of the active site of the mature decarboxylase.

The protein resides in the cell membrane. The catalysed reaction is a 1,2-diacyl-sn-glycero-3-phospho-L-serine + H(+) = a 1,2-diacyl-sn-glycero-3-phosphoethanolamine + CO2. It participates in phospholipid metabolism; phosphatidylethanolamine biosynthesis; phosphatidylethanolamine from CDP-diacylglycerol: step 2/2. Functionally, catalyzes the formation of phosphatidylethanolamine (PtdEtn) from phosphatidylserine (PtdSer). The chain is Phosphatidylserine decarboxylase proenzyme from Pseudomonas aeruginosa (strain ATCC 15692 / DSM 22644 / CIP 104116 / JCM 14847 / LMG 12228 / 1C / PRS 101 / PAO1).